The sequence spans 112 residues: UPF0102 protein CFF8240_0294 (112 aa).

The protein belongs to the UPF0102 family.

The chain is UPF0102 protein CFF8240_0294 from Campylobacter fetus subsp. fetus (strain 82-40).